The primary structure comprises 163 residues: Epithelial membrane protein 3 (163 aa).

A helical membrane pass occupies residues 4-24 (LLLVVSALHILILVLLFVATL). Residues Asn46 and Asn56 are each glycosylated (N-linked (GlcNAc...) asparagine). Transmembrane regions (helical) follow at residues 66 to 86 (VQALMVLSLILCCLSFILFMI), 100 to 120 (TGLCQLCTSAAVFSGALIYAI), and 139 to 159 (FALAWVAFPLALVSGIIYIHL).

Belongs to the PMP-22/EMP/MP20 family.

Its subcellular location is the membrane. In terms of biological role, probably involved in cell proliferation and cell-cell interactions. This Rattus norvegicus (Rat) protein is Epithelial membrane protein 3 (Emp3).